We begin with the raw amino-acid sequence, 189 residues long: Crossover junction endodeoxyribonuclease RuvC (189 aa).

Catalysis depends on residues Asp-8, Glu-67, and Asp-139. Mg(2+)-binding residues include Asp-8, Glu-67, and Asp-139.

Belongs to the RuvC family. In terms of assembly, homodimer which binds Holliday junction (HJ) DNA. The HJ becomes 2-fold symmetrical on binding to RuvC with unstacked arms; it has a different conformation from HJ DNA in complex with RuvA. In the full resolvosome a probable DNA-RuvA(4)-RuvB(12)-RuvC(2) complex forms which resolves the HJ. The cofactor is Mg(2+).

The protein localises to the cytoplasm. It catalyses the reaction Endonucleolytic cleavage at a junction such as a reciprocal single-stranded crossover between two homologous DNA duplexes (Holliday junction).. Functionally, the RuvA-RuvB-RuvC complex processes Holliday junction (HJ) DNA during genetic recombination and DNA repair. Endonuclease that resolves HJ intermediates. Cleaves cruciform DNA by making single-stranded nicks across the HJ at symmetrical positions within the homologous arms, yielding a 5'-phosphate and a 3'-hydroxyl group; requires a central core of homology in the junction. The consensus cleavage sequence is 5'-(A/T)TT(C/G)-3'. Cleavage occurs on the 3'-side of the TT dinucleotide at the point of strand exchange. HJ branch migration catalyzed by RuvA-RuvB allows RuvC to scan DNA until it finds its consensus sequence, where it cleaves and resolves the cruciform DNA. This is Crossover junction endodeoxyribonuclease RuvC from Histophilus somni (strain 129Pt) (Haemophilus somnus).